A 1167-amino-acid chain; its full sequence is Carbamoyl phosphate synthase large chain (1167 aa).

A carboxyphosphate synthetic domain region spans residues 1–455 (MPRRTDIKSI…SLQKALRGLE (455 aa)). ATP-binding residues include Arg129, Arg221, Gly227, Gly228, Glu260, Val262, Glu267, Gly293, Val294, His295, Gln337, and Glu351. The ATP-grasp 1 domain occupies 184–380 (LETRWNLGEG…IAKIAAKLAV (197 aa)). The Mg(2+) site is built by Gln337, Glu351, and Asn353. Gln337, Glu351, and Asn353 together coordinate Mn(2+). An oligomerization domain region spans residues 456–619 (TGLTGLDEIE…PFAGALANEA (164 aa)). Positions 620-1031 (QVSSRKKVVI…AFAKSQLGAG (412 aa)) are carbamoyl phosphate synthetic domain. In terms of domain architecture, ATP-grasp 2 spans 748-960 (QKLLHKLGLS…IAKIAARIMA (213 aa)). The ATP site is built by Arg784, Thr844, Leu846, Glu851, Gly876, Ile877, His878, Ser879, Gln919, and Glu931. 3 residues coordinate Mg(2+): Gln919, Glu931, and Asn933. Gln919, Glu931, and Asn933 together coordinate Mn(2+). One can recognise an MGS-like domain in the interval 1032–1167 (VDLPRSGTLF…EVRPLQEYFA (136 aa)). Positions 1032-1167 (VDLPRSGTLF…EVRPLQEYFA (136 aa)) are allosteric domain.

It belongs to the CarB family. In terms of assembly, composed of two chains; the small (or glutamine) chain promotes the hydrolysis of glutamine to ammonia, which is used by the large (or ammonia) chain to synthesize carbamoyl phosphate. Tetramer of heterodimers (alpha,beta)4. It depends on Mg(2+) as a cofactor. Requires Mn(2+) as cofactor.

It carries out the reaction hydrogencarbonate + L-glutamine + 2 ATP + H2O = carbamoyl phosphate + L-glutamate + 2 ADP + phosphate + 2 H(+). It catalyses the reaction hydrogencarbonate + NH4(+) + 2 ATP = carbamoyl phosphate + 2 ADP + phosphate + 2 H(+). Its pathway is amino-acid biosynthesis; L-arginine biosynthesis; carbamoyl phosphate from bicarbonate: step 1/1. The protein operates within pyrimidine metabolism; UMP biosynthesis via de novo pathway; (S)-dihydroorotate from bicarbonate: step 1/3. Large subunit of the glutamine-dependent carbamoyl phosphate synthetase (CPSase). CPSase catalyzes the formation of carbamoyl phosphate from the ammonia moiety of glutamine, carbonate, and phosphate donated by ATP, constituting the first step of 2 biosynthetic pathways, one leading to arginine and/or urea and the other to pyrimidine nucleotides. The large subunit (synthetase) binds the substrates ammonia (free or transferred from glutamine from the small subunit), hydrogencarbonate and ATP and carries out an ATP-coupled ligase reaction, activating hydrogencarbonate by forming carboxy phosphate which reacts with ammonia to form carbamoyl phosphate. The chain is Carbamoyl phosphate synthase large chain from Mesorhizobium japonicum (strain LMG 29417 / CECT 9101 / MAFF 303099) (Mesorhizobium loti (strain MAFF 303099)).